The sequence spans 430 residues: Trigger factor (430 aa).

The PPIase FKBP-type domain occupies 157 to 242 (GDLVALETWS…AVEVSEPVLP (86 aa)).

The protein belongs to the FKBP-type PPIase family. Tig subfamily.

It is found in the cytoplasm. The enzyme catalyses [protein]-peptidylproline (omega=180) = [protein]-peptidylproline (omega=0). Its function is as follows. Involved in protein export. Acts as a chaperone by maintaining the newly synthesized protein in an open conformation. Functions as a peptidyl-prolyl cis-trans isomerase. The sequence is that of Trigger factor from Xanthomonas campestris pv. campestris (strain ATCC 33913 / DSM 3586 / NCPPB 528 / LMG 568 / P 25).